The following is a 698-amino-acid chain: SHC SH2 domain-binding protein 1 homolog B (698 aa).

3 PbH1 repeats span residues 480 to 502 (CAEL…EIYP), 503 to 524 (GSKC…LIKD), and 532 to 554 (IPKI…VLVK).

It is found in the midbody. The protein localises to the cytoplasm. It localises to the cytoskeleton. The protein resides in the spindle. Functionally, may play a role in signaling pathways governing cellular proliferation. This Xenopus laevis (African clawed frog) protein is SHC SH2 domain-binding protein 1 homolog B (shcbp1-b).